A 605-amino-acid polypeptide reads, in one-letter code: LysM domain receptor-like kinase 10 (605 aa).

The N-terminal stretch at 1 to 20 is a signal peptide; that stretch reads MFSLPALLIGACAFAAAAVA. The Extracellular segment spans residues 21–245; it reads ASGDGCRAGC…GMGNSLSGGA (225 aa). 3 disulfide bridges follow: Cys-26/Cys-89, Cys-30/Cys-161, and Cys-87/Cys-159. Asn-44 is a glycosylation site (N-linked (GlcNAc...) asparagine). Residues 115 to 121 and 142 to 148 contribute to the chitin site; these read GGDTYDA and PPGRIPG. N-linked (GlcNAc...) asparagine glycans are attached at residues Asn-154 and Asn-158. The 48-residue stretch at 174–221 folds into the LysM domain; it reads LTYPLWDGETLESVAAQYGFSSPAEMELIRRYNPGMGGVSGKGIVFIP. An N-linked (GlcNAc...) asparagine glycan is attached at Asn-226. Residues 246 to 266 traverse the membrane as a helical segment; sequence IAGIVIACIAIFIVAIWLIIM. The Cytoplasmic segment spans residues 267–605; the sequence is FYRWQKFRKA…DLRDMDYHPF (339 aa). Ser-278 is subject to Phosphoserine. A Protein kinase domain is found at 317-591; that stretch reads FSMEHKIGQG…RSVVVALMAL (275 aa). ATP is bound by residues 323-331 and Lys-344; that span reads IGQGGFGSV. The active-site Proton acceptor is Asp-436.

This sequence belongs to the protein kinase superfamily. Ser/Thr protein kinase family.

Its subcellular location is the cell membrane. It carries out the reaction L-seryl-[protein] + ATP = O-phospho-L-seryl-[protein] + ADP + H(+). The enzyme catalyses L-threonyl-[protein] + ATP = O-phospho-L-threonyl-[protein] + ADP + H(+). In Oryza sativa subsp. japonica (Rice), this protein is LysM domain receptor-like kinase 10.